Reading from the N-terminus, the 804-residue chain is MRALWVLGLCCVLLTFGSVRADDEVDVDGTVEEDLGKSREGSRTDDEVVQREEEAIQLDGLNASQIRELREKSEKFAFQAEVNRMMKLIINSLYKNKEIFLRELISNASDALDKIRLISLTDENALAGNEELTVKIKCDKEKNLLHVTDTGVGMTREELVKNLGTIAKSGTSEFLNKMTEAQEDGQSTSELIGQFGVGFYSAFLVADKVIVTSKHNNDTQHIWESDSNEFSVIADPRGNTLGRGTTITLVLKEEASDYLELDTIKNLVKKYSQFINFPIYVWSSKTETVEEPAEEEEAAKEDKEESDDEAAVEEEEDEKKPKTKKVEKTVWDWELMNDIKPIWQRPSKEVEEDEYKAFYKSFSKESDDPMAYIHFTAEGEVTFKSILFVPTSAPRGLFDEYGSKKSDYIKLYVRRVFITDDFHDMMPKYLNFVKGVVDSDDLPLNVSRETLQQHKLLKVIRKKLVRKTLDMIKKIADEKYNDTFWKEFGTNIKLGVIEDHSNRTRLAKLLRFQSSHHPSDMTSLDQYVERMKEKQDKIYFMAGASRKEAESSPFVERLLKKGYEVIYLTEPVDEYCIQALPEFDGKRFQNVAKEGVKFDESEKSKESREAVEKEFEPLLNWMKDKALKDKIEKAVVSQRLTESPCALVASQYGWSGNMERIMKAQAYQTGKDISTNYYASQKKTFEINPRHPLIRDMLRRVKEDEDDKTVSDLAVVLFETATLRSGYLLPDTKAYGDRIERMLRLSLNIDPDAKVEEEPEEEPEETTEDTAEDTEQDEEEEMDAGTDEEEQETAEKSTAEKDEL.

A signal peptide spans Met-1–Ala-21. The SRT pseudosubstrate motif signature appears at Ser-42 to Thr-44. An N-linked (GlcNAc...) asparagine glycan is attached at Asn-62. Ser-64 carries the phosphoserine modification. Asn-107 is a glycosylation site (N-linked (GlcNAc...) asparagine). The ATP site is built by Asn-107, Asp-149, and Asn-162. Lys-168 bears the N6-(2-hydroxyisobutyryl)lysine mark. Ser-172 is modified (phosphoserine). Phe-199 contacts ATP. Asn-217 is a glycosylation site (N-linked (GlcNAc...) asparagine). The segment at Thr-288–Thr-323 is disordered. The segment covering Val-289–Asp-317 has biased composition (acidic residues). Ser-306 and Ser-403 each carry phosphoserine. Position 404 is an N6-succinyllysine (Lys-404). N-linked (GlcNAc...) asparagine glycosylation occurs at Asn-445. Ser-447 bears the Phosphoserine mark. N6-acetyllysine is present on Lys-479. Asn-481 and Asn-502 each carry an N-linked (GlcNAc...) asparagine glycan. Lys-633 carries the post-translational modification N6-succinyllysine. Positions Asp-750–Leu-804 are disordered. Positions Glu-757–Glu-792 are enriched in acidic residues. Thr-786 bears the Phosphothreonine mark. Residues Thr-793–Leu-804 show a composition bias toward basic and acidic residues. The Prevents secretion from ER motif lies at Lys-801 to Leu-804.

This sequence belongs to the heat shock protein 90 family. Homodimer; disulfide-linked. Component of an EIF2 complex at least composed of CELF1/CUGBP1, CALR, CALR3, EIF2S1, EIF2S2, HSP90B1 and HSPA5. Part of a large chaperone multiprotein complex comprising DNAJB11, HSP90B1, HSPA5, HYOU, PDIA2, PDIA4, PDIA6, PPIB, SDF2L1, UGGT1 and very small amounts of ERP29, but not, or at very low levels, CALR nor CANX. Interacts with AIMP1; regulates its retention in the endoplasmic reticulum. Hyperglycosylated form interacts with OS9; promoting its degradation by the endoplasmic reticulum associated degradation (ERAD). Interacts with CNPY3. This interaction is disrupted in the presence of ATP. Interacts with TLR4 and TLR9, but not with TLR3. Interacts with MZB1 in a calcium-dependent manner. Interacts with METTL23. Interacts with IL1B; the interaction facilitates cargo translocation into the ERGIC. Interacts with EIF2AK3. Phosphorylated by CK2. In terms of processing, N-glycosylated cotranslationally at Asn-217 by STT3A-containing OST-A complex: this glycosylation is constitutive. In response to various stress, 5 additional facultative sites (Asn-62, Asn-107, Asn-445, Asn-481 and Asn-502) can be glycosylated post-translationally by STT3B-containing OST-B complex, leading to a hyperglycosylated form that is degraded by the ER-associated degradation (ERAD) pathway. In normal conditions, the OST-A complex together with CCDC134 prevent glycosylation at facultative sites during protein folding, thereby preventing hyperglycosylation. Mechanistically, nascent HSP90B1 is tethered during translation to a specialized CCDC134-containing translocon that forms a microenvironment for its folding, in which STT3A associates with the SRT pseudosubstrate motif, and prevents access to facultative glycosylation sites until folding is completed, rendering its facultative sites inaccessible to the OST-B complex.

Its subcellular location is the endoplasmic reticulum lumen. It is found in the sarcoplasmic reticulum lumen. The protein localises to the melanosome. It carries out the reaction ATP + H2O = ADP + phosphate + H(+). Functionally, ATP-dependent chaperone involved in the processing of proteins in the endoplasmic reticulum, regulating their transport. Together with MESD, acts as a modulator of the Wnt pathway by promoting the folding of LRP6, a coreceptor of the canonical Wnt pathway. When associated with CNPY3, required for proper folding of Toll-like receptors. Promotes folding and trafficking of TLR4 to the cell surface. May participate in the unfolding of cytosolic leaderless cargos (lacking the secretion signal sequence) such as the interleukin 1/IL-1 to facilitate their translocation into the ERGIC (endoplasmic reticulum-Golgi intermediate compartment) and secretion; the translocation process is mediated by the cargo receptor TMED10. The protein is Endoplasmin (HSP90B1) of Bos taurus (Bovine).